We begin with the raw amino-acid sequence, 219 residues long: Probable N-acetyltransferase camello (219 aa).

2 consecutive transmembrane segments (helical) span residues phenylalanine 42–leucine 62 and leucine 64–glycine 84. Residues leucine 62–lysine 218 enclose the N-acetyltransferase domain.

The protein belongs to the camello family. As to expression, at the beginning of gastrulation, expressed in deep cells of the presumptive mesoderm. At later gastrulation stages, expressed at the interface between already involuted and preinvoluted mesoderm. At late neurula and tailbud stages, expressed in the deep mass of cells lying ventrally and laterally to the closed blastopore.

The protein resides in the golgi apparatus membrane. Its function is as follows. Plays a role in regulation of gastrulation, possibly by controlled reduction of cell adhesion which is necessary for optimal cell motility. This is Probable N-acetyltransferase camello from Xenopus laevis (African clawed frog).